A 347-amino-acid chain; its full sequence is MSATSIQPLLDILFLGKALTREQTASLFSTLIQGEMNEAVMAAMLMALKIRGETIAEISGAADAMRAAAKPFPYPASSRSQGIIDIVGTGGDGFNTINISTTAAFVAAAAGAKVAKHGNRSVSSKSGSSDLLAQFGIDLTMSPELASRCLESLNLCFLFAPHYHGGVKHAVPVRQALKTRTLFNVLGPLINPARPEFMLLGVYSPELVTPIARVLQALGTQRAMVVHGSGLDEVALHGSTQVAELKDGEIIEYQLTPADFGVPQAQISELEGGEPAQNAQITQSILQGQGSDAHTHAVAINAGCALYLCGLSDSVKAGTALALNTIKSGKAFELLNQLAKVSSEAQE.

5-phospho-alpha-D-ribose 1-diphosphate-binding positions include Gly88, 91 to 92, Thr96, 98 to 101, 116 to 124, and Ser128; these read GD, NIST, and KHGNRSVSS. Residue Gly88 coordinates anthranilate. Ser100 serves as a coordination point for Mg(2+). An anthranilate-binding site is contributed by Asn119. Arg174 serves as a coordination point for anthranilate. Residues Asp232 and Glu233 each coordinate Mg(2+).

Belongs to the anthranilate phosphoribosyltransferase family. Homodimer. Mg(2+) serves as cofactor.

The catalysed reaction is N-(5-phospho-beta-D-ribosyl)anthranilate + diphosphate = 5-phospho-alpha-D-ribose 1-diphosphate + anthranilate. It functions in the pathway amino-acid biosynthesis; L-tryptophan biosynthesis; L-tryptophan from chorismate: step 2/5. Its function is as follows. Catalyzes the transfer of the phosphoribosyl group of 5-phosphorylribose-1-pyrophosphate (PRPP) to anthranilate to yield N-(5'-phosphoribosyl)-anthranilate (PRA). In Shewanella sp. (strain ANA-3), this protein is Anthranilate phosphoribosyltransferase.